Here is a 53-residue protein sequence, read N- to C-terminus: Photoreceptor disk component PRCD (53 aa).

Cys-2 carries S-palmitoyl cysteine lipidation. Residues 24–53 (PEPSRVDGTVVGSGSDTDLQSTGREKGPVK) are disordered. Polar residues predominate over residues 35 to 45 (GSGSDTDLQST).

This sequence belongs to the PRCD family. Interacts with RHO/rhodopsin; the interaction promotes PRCD stability. In terms of processing, palmitoylated at Cys-2. Palmitoylation is essential for protein stability and trafficking to the photoreceptor outer segment, but does not appear to be essential for membrane localization. Probably palmitoylated by ZDHHC3. Phosphorylated. As to expression, expressed in retina, where it localizes to both rod and cone photoreceptors (at protein level).

Its subcellular location is the cell projection. The protein resides in the cilium. The protein localises to the photoreceptor outer segment. It localises to the membrane. It is found in the endoplasmic reticulum. Its subcellular location is the golgi apparatus. Functionally, involved in vision. The polypeptide is Photoreceptor disk component PRCD (Mus musculus (Mouse)).